Consider the following 326-residue polypeptide: 4-hydroxythreonine-4-phosphate dehydrogenase (326 aa).

His130 and Thr131 together coordinate substrate. A divalent metal cation contacts are provided by His160, His205, and His260. Substrate contacts are provided by Lys268, Asn277, and Arg286.

Belongs to the PdxA family. As to quaternary structure, homodimer. The cofactor is Zn(2+). Mg(2+) is required as a cofactor. Co(2+) serves as cofactor.

It is found in the cytoplasm. It catalyses the reaction 4-(phosphooxy)-L-threonine + NAD(+) = 3-amino-2-oxopropyl phosphate + CO2 + NADH. It functions in the pathway cofactor biosynthesis; pyridoxine 5'-phosphate biosynthesis; pyridoxine 5'-phosphate from D-erythrose 4-phosphate: step 4/5. Its function is as follows. Catalyzes the NAD(P)-dependent oxidation of 4-(phosphooxy)-L-threonine (HTP) into 2-amino-3-oxo-4-(phosphooxy)butyric acid which spontaneously decarboxylates to form 3-amino-2-oxopropyl phosphate (AHAP). This Aromatoleum aromaticum (strain DSM 19018 / LMG 30748 / EbN1) (Azoarcus sp. (strain EbN1)) protein is 4-hydroxythreonine-4-phosphate dehydrogenase.